The following is a 57-amino-acid chain: uncharacterized protein (57 aa).

Residues 34 to 54 traverse the membrane as a helical segment; that stretch reads AALLDAAALVVIPGLLTAAAV.

Its subcellular location is the membrane. This is an uncharacterized protein from Dictyostelium discoideum (Social amoeba).